Reading from the N-terminus, the 516-residue chain is Maturase K (516 aa).

It belongs to the intron maturase 2 family. MatK subfamily.

The protein localises to the plastid. The protein resides in the chloroplast. In terms of biological role, usually encoded in the trnK tRNA gene intron. Probably assists in splicing its own and other chloroplast group II introns. The sequence is that of Maturase K from Medeola virginiana (Indian cucumber root).